The chain runs to 78 residues: Mandibular organ-inhibiting hormone 2 (78 aa).

Intrachain disulfides connect C7-C44, C24-C40, and C27-C53.

Belongs to the arthropod CHH/MIH/GIH/VIH hormone family. As to expression, produced by the medulla terminalis X-organ in the eyestalks and transported to the sinus gland where it is stored and released.

It is found in the secreted. Its function is as follows. Represses the synthesis of methyl farnesoate, the precursor of insect juvenile hormone III in the mandibular organ. The sequence is that of Mandibular organ-inhibiting hormone 2 from Cancer pagurus (Rock crab).